The primary structure comprises 350 residues: GTPase Obg (350 aa).

One can recognise an Obg domain in the interval 1 to 159; the sequence is MKFIDEAKIT…WELALELKVL (159 aa). The disordered stretch occupies residues 17–43; it reads GDGSASFRREKYIPKGGPDGGDGGRGG. Over residues 33–43 the composition is skewed to gly residues; the sequence is GPDGGDGGRGG. In terms of domain architecture, OBG-type G spans 160 to 334; sequence ADVGLLGMPN…LTYAVMDYLG (175 aa). Residues 166–173, 191–195, 213–216, 284–287, and 315–317 contribute to the GTP site; these read GMPNAGKS, FTTLA, DIPG, NKLD, and SAL. 2 residues coordinate Mg(2+): Ser173 and Thr193.

The protein belongs to the TRAFAC class OBG-HflX-like GTPase superfamily. OBG GTPase family. In terms of assembly, monomer. The cofactor is Mg(2+).

Its subcellular location is the cytoplasm. In terms of biological role, an essential GTPase which binds GTP, GDP and possibly (p)ppGpp with moderate affinity, with high nucleotide exchange rates and a fairly low GTP hydrolysis rate. Plays a role in control of the cell cycle, stress response, ribosome biogenesis and in those bacteria that undergo differentiation, in morphogenesis control. The chain is GTPase Obg from Thiobacillus denitrificans (strain ATCC 25259 / T1).